The primary structure comprises 283 residues: MPELPEVEVVRRGLHSHVVGKTIGAVRVHHPRAVRRHEAGPADLTARLLGARITGTDRRGKYLWLLLDGRDTALVVHLGMSGQMLLGAVPRAEHVRISALLDDGTVLSFADQRTFGGWMLADLLEVDGSVVPEPVAHLARDPLDPRFDADAVVKVLRRKHSEIKRQLLDQQVVSGIGNIYADEALWRAKVHGARIADALTRKQLTAVLDAAADVMRDALAKGGTSFDSLYVNVNGESGYFDRSLDAYGREGESCRRCGAVMRREKFMNRSSFYCPKCQPRPRL.

The Schiff-base intermediate with DNA role is filled by Pro-2. The active-site Proton donor is the Glu-3. The Proton donor; for beta-elimination activity role is filled by Lys-61. DNA-binding residues include His-94, Arg-113, and Lys-159. An FPG-type zinc finger spans residues 245 to 279; the sequence is DAYGREGESCRRCGAVMRREKFMNRSSFYCPKCQP. Residue Arg-269 is the Proton donor; for delta-elimination activity of the active site.

This sequence belongs to the FPG family. In terms of assembly, monomer. Zn(2+) serves as cofactor.

The enzyme catalyses Hydrolysis of DNA containing ring-opened 7-methylguanine residues, releasing 2,6-diamino-4-hydroxy-5-(N-methyl)formamidopyrimidine.. It carries out the reaction 2'-deoxyribonucleotide-(2'-deoxyribose 5'-phosphate)-2'-deoxyribonucleotide-DNA = a 3'-end 2'-deoxyribonucleotide-(2,3-dehydro-2,3-deoxyribose 5'-phosphate)-DNA + a 5'-end 5'-phospho-2'-deoxyribonucleoside-DNA + H(+). Its function is as follows. Involved in base excision repair of DNA damaged by oxidation or by mutagenic agents. Acts as a DNA glycosylase that recognizes and removes damaged bases. Has a preference for oxidized purines, such as 7,8-dihydro-8-oxoguanine (8-oxoG). Has AP (apurinic/apyrimidinic) lyase activity and introduces nicks in the DNA strand. Cleaves the DNA backbone by beta-delta elimination to generate a single-strand break at the site of the removed base with both 3'- and 5'-phosphates. The polypeptide is Formamidopyrimidine-DNA glycosylase (Mycobacterium avium (strain 104)).